The sequence spans 167 residues: Zymogen granule membrane protein 16 (167 aa).

A signal peptide spans 1 to 16 (MLAVALLVLLCASASA). The Jacalin-type lectin domain occupies 24 to 159 (SSYSGEYGGK…IDSISLHWDT (136 aa)).

The protein belongs to the jacalin lectin family.

The protein resides in the secreted. The protein localises to the extracellular space. It localises to the extracellular matrix. It is found in the zymogen granule lumen. Its subcellular location is the golgi apparatus lumen. May play a role in protein trafficking. May act as a linker molecule between the submembranous matrix on the luminal side of zymogen granule membrane (ZGM) and aggregated secretory proteins during granule formation in the TGN. In Mus musculus (Mouse), this protein is Zymogen granule membrane protein 16 (Zg16).